A 1186-amino-acid polypeptide reads, in one-letter code: DNA-directed RNA polymerase subunit beta (1186 aa).

The segment at 1149 to 1186 (KEEDDDPSTSSDDLGFNIGARPDAAAKEDQVAEEPEFQ) is disordered.

This sequence belongs to the RNA polymerase beta chain family. In terms of assembly, the RNAP catalytic core consists of 2 alpha, 1 beta, 1 beta' and 1 omega subunit. When a sigma factor is associated with the core the holoenzyme is formed, which can initiate transcription.

It catalyses the reaction RNA(n) + a ribonucleoside 5'-triphosphate = RNA(n+1) + diphosphate. Functionally, DNA-dependent RNA polymerase catalyzes the transcription of DNA into RNA using the four ribonucleoside triphosphates as substrates. This is DNA-directed RNA polymerase subunit beta from Bifidobacterium adolescentis (strain ATCC 15703 / DSM 20083 / NCTC 11814 / E194a).